The primary structure comprises 194 residues: Holliday junction branch migration complex subunit RuvA (194 aa).

The tract at residues 1–64 (MIGRLRGILA…EDSVSLYGFL (64 aa)) is domain I. The domain II stretch occupies residues 65 to 140 (REGERRLFRD…RAADFSSGAP (76 aa)). Residues 140-144 (PITGQ) are flexible linker. A domain III region spans residues 145–194 (LGPDAISEATVALQQLGYKPAEAARMARDAGAEGGEVATVIRKALQAALR).

Belongs to the RuvA family. As to quaternary structure, homotetramer. Forms an RuvA(8)-RuvB(12)-Holliday junction (HJ) complex. HJ DNA is sandwiched between 2 RuvA tetramers; dsDNA enters through RuvA and exits via RuvB. An RuvB hexamer assembles on each DNA strand where it exits the tetramer. Each RuvB hexamer is contacted by two RuvA subunits (via domain III) on 2 adjacent RuvB subunits; this complex drives branch migration. In the full resolvosome a probable DNA-RuvA(4)-RuvB(12)-RuvC(2) complex forms which resolves the HJ.

The protein resides in the cytoplasm. Functionally, the RuvA-RuvB-RuvC complex processes Holliday junction (HJ) DNA during genetic recombination and DNA repair, while the RuvA-RuvB complex plays an important role in the rescue of blocked DNA replication forks via replication fork reversal (RFR). RuvA specifically binds to HJ cruciform DNA, conferring on it an open structure. The RuvB hexamer acts as an ATP-dependent pump, pulling dsDNA into and through the RuvAB complex. HJ branch migration allows RuvC to scan DNA until it finds its consensus sequence, where it cleaves and resolves the cruciform DNA. The protein is Holliday junction branch migration complex subunit RuvA of Xanthomonas oryzae pv. oryzae (strain MAFF 311018).